The primary structure comprises 323 residues: Di/tripeptide transport ATP-binding protein DppF (323 aa).

One can recognise an ABC transporter domain in the interval 5–254 (LTARDLTRHY…PLHPYTRALL (250 aa)). 47–54 (GESGCGKS) serves as a coordination point for ATP.

It belongs to the ABC transporter superfamily. As to quaternary structure, the complex is composed of two ATP-binding proteins (DppD and DppF), two transmembrane proteins (DppB and DppC) and a solute-binding protein (DppA1-A5). Five orthologous SBPs (DppA1-A5) are present in P.aeruginosa, which increases the substrate specificity of the DppBCDF transporter.

It localises to the cell inner membrane. It carries out the reaction a dipeptide(out) + ATP + H2O = a dipeptide(in) + ADP + phosphate + H(+). Part of the ABC transporter DppABCDF involved in the uptake of various di/tripeptides. Is also involved in the uptake of phaseolotoxin, a toxic tripeptide inhibiting the enzyme ornithine carbamoyltransferase. Responsible for energy coupling to the transport system. This is Di/tripeptide transport ATP-binding protein DppF from Pseudomonas aeruginosa (strain UCBPP-PA14).